A 180-amino-acid chain; its full sequence is Thiol:disulfide interchange protein TxlA homolog (180 aa).

Residues 10–26 (LLAVVAIALSAAVYLGF) traverse the membrane as a helical segment. In terms of domain architecture, Thioredoxin spans 34–143 (SLEAQAQRAI…LEQNITALVA (110 aa)). A disulfide bond links Cys-64 and Cys-67.

The protein belongs to the thioredoxin family.

It is found in the cell membrane. Functionally, required for disulfide bond formation in some proteins. Acts by transferring its disulfide bond to other proteins and is reduced in the process. This Synechocystis sp. (strain ATCC 27184 / PCC 6803 / Kazusa) protein is Thiol:disulfide interchange protein TxlA homolog (txlA).